A 208-amino-acid chain; its full sequence is Mediator of RNA polymerase II transcription subunit 18 (208 aa).

Belongs to the Mediator complex subunit 18 family. As to quaternary structure, component of the Mediator complex.

The protein resides in the nucleus. Component of the Mediator complex, a coactivator involved in the regulated transcription of nearly all RNA polymerase II-dependent genes. Mediator functions as a bridge to convey information from gene-specific regulatory proteins to the basal RNA polymerase II transcription machinery. Mediator is recruited to promoters by direct interactions with regulatory proteins and serves as a scaffold for the assembly of a functional preinitiation complex with RNA polymerase II and the general transcription factors. The sequence is that of Mediator of RNA polymerase II transcription subunit 18 (med18) from Danio rerio (Zebrafish).